The chain runs to 407 residues: 3-oxoacyl-[acyl-carrier-protein] synthase 1 (407 aa).

The Ketosynthase family 3 (KS3) domain maps to 1-406 (MKRVVITGFG…GTNVSLILKK (406 aa)). Residues C164, H300, and H336 each act as for beta-ketoacyl synthase activity in the active site.

Belongs to the thiolase-like superfamily. Beta-ketoacyl-ACP synthases family. In terms of assembly, homodimer.

The protein localises to the cytoplasm. The catalysed reaction is a fatty acyl-[ACP] + malonyl-[ACP] + H(+) = a 3-oxoacyl-[ACP] + holo-[ACP] + CO2. The enzyme catalyses (3Z)-decenoyl-[ACP] + malonyl-[ACP] + H(+) = 3-oxo-(5Z)-dodecenoyl-[ACP] + holo-[ACP] + CO2. It functions in the pathway lipid metabolism; fatty acid biosynthesis. Functionally, involved in the type II fatty acid elongation cycle. Catalyzes the elongation of a wide range of acyl-ACP by the addition of two carbons from malonyl-ACP to an acyl acceptor. Can also use unsaturated fatty acids. Catalyzes a key reaction in unsaturated fatty acid (UFA) synthesis, the elongation of the cis-3-decenoyl-ACP produced by FabA. The protein is 3-oxoacyl-[acyl-carrier-protein] synthase 1 (fabB) of Buchnera aphidicola subsp. Schizaphis graminum (strain Sg).